A 79-amino-acid polypeptide reads, in one-letter code: U-actitoxin-Avd8a (79 aa).

The N-terminal stretch at 1–19 (MKSLVIVFVVLLGVAMISA) is a signal peptide. A propeptide spanning residues 20 to 36 (NEEELLAILQDQRNDAR) is cleaved from the precursor.

Belongs to the sea anemone 8 toxin family.

The protein localises to the secreted. It localises to the nematocyst. This Anemonia viridis (Snakelocks anemone) protein is U-actitoxin-Avd8a.